Consider the following 95-residue polypeptide: NADH-quinone oxidoreductase subunit 11 (95 aa).

The next 3 helical transmembrane spans lie at 1–21 (MSYL…VLTR), 25–45 (ILVF…LVGF), and 59–79 (MVIA…VAIF).

The protein belongs to the complex I subunit 4L family. NDH-1 is composed of 15 different subunits, Nqo1 to Nqo15. The complex has a L-shaped structure, with the hydrophobic arm (subunits Nqo7, Nqo8 and Nqo10 to Nqo14) embedded in the membrane and the hydrophilic peripheral arm (subunits Nqo1 to Nqo6, Nqo9 and Nqo15) protruding into the bacterial cytoplasm. The hydrophilic domain contains all the redox centers.

The protein localises to the cell inner membrane. The catalysed reaction is a quinone + NADH + 5 H(+)(in) = a quinol + NAD(+) + 4 H(+)(out). Its function is as follows. NDH-1 shuttles electrons from NADH, via FMN and iron-sulfur (Fe-S) centers, to quinones in the respiratory chain. The immediate electron acceptor for the enzyme in this species is menaquinone. Couples the redox reaction to proton translocation (for every two electrons transferred, four hydrogen ions are translocated across the cytoplasmic membrane), and thus conserves the redox energy in a proton gradient required for the synthesis of ATP. This chain is NADH-quinone oxidoreductase subunit 11 (nqo11), found in Thermus thermophilus (strain ATCC 27634 / DSM 579 / HB8).